The sequence spans 453 residues: CBL-interacting protein kinase 24 (453 aa).

A Protein kinase domain is found at 18-271 (YEVGRTIGQG…IEQIREDTWF (254 aa)). Residues 24 to 32 (IGQGTFAKV) and K47 contribute to the ATP site. The active-site Proton acceptor is the D141. The segment at 159–186 (DFGLSTLAQKGVGLLHTTCGTPNYVAPE) is activation loop. In terms of domain architecture, NAF spans 310-336 (NDGGPLVMNAFEMITLSQGLDLSALFD). The segment at 343–372 (KRQTRFVSRKPAKTIVATIEVVAETMGLKV) is PPI.

It belongs to the protein kinase superfamily. CAMK Ser/Thr protein kinase family. SNF1 subfamily. In terms of assembly, interacts with CBL4. Mn(2+) serves as cofactor.

The catalysed reaction is L-seryl-[protein] + ATP = O-phospho-L-seryl-[protein] + ADP + H(+). It carries out the reaction L-threonyl-[protein] + ATP = O-phospho-L-threonyl-[protein] + ADP + H(+). Involved in the regulatory pathway for the control of intracellular Na(+) and K(+) homeostasis and salt tolerance. Operates in synergy with CBL4 to activate the plasma membrane Na(+)/H(+) antiporter SOS1. CIPK serine-threonine protein kinases interact with CBL proteins. Binding of a CBL protein to the regulatory NAF domain of CIPK protein lead to the activation of the kinase in a calcium-dependent manner. This is CBL-interacting protein kinase 24 (CIPK24) from Oryza sativa subsp. japonica (Rice).